A 303-amino-acid chain; its full sequence is MYYGFDMGGTKIELGVFDANLQRIWHKRVPTPREDYSLLLQTLHDLTREADEFCGSKGSVGIGIPGLPNADDGTVFTANVPAAMGQSLQGDLSGLIGREVRIDNDANCFALSEAWDPEFRRYPTVLGLILGTGVGGGLIVNGNIVSGRNHITGEFGHFRLPVDALDILGADIPRVSCGCGHNGCIENYISGRGFEWMYKHFNQQSLPATEIIANYNLGESKAVAHVERFMDVLAVCLGNLLTMLDPHLVVIGGGLSNFEHIYQELPKRLPQHLLRVARLPRIEKARYGDAGGVRGAAFLHLSK.

ATP-binding positions include 4–11 (GFDMGGTK) and 133–140 (GVGGGLIV). H157, C177, C179, and C184 together coordinate Zn(2+).

Belongs to the ROK (NagC/XylR) family. NagK subfamily.

The enzyme catalyses N-acetyl-D-glucosamine + ATP = N-acetyl-D-glucosamine 6-phosphate + ADP + H(+). It participates in cell wall biogenesis; peptidoglycan recycling. In terms of biological role, catalyzes the phosphorylation of N-acetyl-D-glucosamine (GlcNAc) derived from cell-wall degradation, yielding GlcNAc-6-P. This is N-acetyl-D-glucosamine kinase from Yersinia enterocolitica serotype O:8 / biotype 1B (strain NCTC 13174 / 8081).